A 220-amino-acid polypeptide reads, in one-letter code: UPF0502 protein CV_4303 (220 aa).

This sequence belongs to the UPF0502 family.

In Chromobacterium violaceum (strain ATCC 12472 / DSM 30191 / JCM 1249 / CCUG 213 / NBRC 12614 / NCIMB 9131 / NCTC 9757 / MK), this protein is UPF0502 protein CV_4303.